The following is an 81-amino-acid chain: RNA-binding protein Hfq (81 aa).

Residues 10–69 (DPFLNTLRKEHIPVSIYLVNGIKLQGHIDSFDQYVVLLKNTVTQMVYKHAISTVVPARAV) form the Sm domain.

The protein belongs to the Hfq family. As to quaternary structure, homohexamer.

In terms of biological role, RNA chaperone that binds small regulatory RNA (sRNAs) and mRNAs to facilitate mRNA translational regulation in response to envelope stress, environmental stress and changes in metabolite concentrations. Also binds with high specificity to tRNAs. This is RNA-binding protein Hfq from Nitrosospira multiformis (strain ATCC 25196 / NCIMB 11849 / C 71).